The following is a 716-amino-acid chain: MIYQSPTIQVELLEDNIARLCFNAEGSVNKFDRETLNSLNDALDALAQTQGVKGLMLTSGKDAFIVGADITEFLGLFAQDDNVLQGWLEDANKVFNKLEDLPFPTISAIKGFALGGGCETILATDLRIADTSARIGLPETKLGIIPGFGGTVRLPRVIGADNALEWITTGKDQRPEAALKVGAIDAVVAPELLETAACQMLQDAISEKIDWQARRQRKLSPLTLPKLEAMMSFATAKGMVFKVAGKHYPAPMAVVEVIEKAALSERAEALQVEHQAFIKLAKTDVAKALIGIFLNDQLVKGKAKKAAKQAQAVNSAAVLGAGIMGGGIAYQSASKGTPIVMKDINQAALDLGLNEAAKLLTAQINRGRSTPAKMAGVLNNITATLDYNALKQADVVVEAVVEHPKVKATVLAEVEQVVGEDAIITSNTSTISINLLAKSLQKPERFCGMHFFNPVHKMPLVEVIRGEHSSEETVASVVAYAAKMGKTPIVVNDCPGFFVNRVLFPYFAGFSGLLEDGADFAAIDKVMEKQFGWPMGPAYLLDVVGLDTGHHAQAVMAEGFPDRMAKEGKDAIDVMFEADRFGQKNGKGFYQYSVDRRGKPKKEVDPLSYELLGNAFGEQKEFSSDEIIARTMIPMIIETVRCLEEGIIATPAEADMGLVYGLGFPPFRGGVFRYLDTLGVANFVALADQYAHLGGLYQVTDKMRELAATNGSYYPA.

Positions 1 to 189 are enoyl-CoA hydratase/isomerase; the sequence is MIYQSPTIQV…KVGAIDAVVA (189 aa). Asp-296 is a binding site for substrate. Positions 311-716 are 3-hydroxyacyl-CoA dehydrogenase; it reads QAVNSAAVLG…AATNGSYYPA (406 aa). Residues Met-324, Asp-343, 400–402, Lys-407, and Ser-429 each bind NAD(+); that span reads VVE. The For 3-hydroxyacyl-CoA dehydrogenase activity role is filled by His-450. Asn-453 serves as a coordination point for NAD(+). Substrate contacts are provided by Asn-500 and Tyr-660.

The protein in the N-terminal section; belongs to the enoyl-CoA hydratase/isomerase family. This sequence in the C-terminal section; belongs to the 3-hydroxyacyl-CoA dehydrogenase family. In terms of assembly, heterotetramer of two alpha chains (FadB) and two beta chains (FadA).

The enzyme catalyses a (3S)-3-hydroxyacyl-CoA + NAD(+) = a 3-oxoacyl-CoA + NADH + H(+). The catalysed reaction is a (3S)-3-hydroxyacyl-CoA = a (2E)-enoyl-CoA + H2O. It carries out the reaction a 4-saturated-(3S)-3-hydroxyacyl-CoA = a (3E)-enoyl-CoA + H2O. It catalyses the reaction (3S)-3-hydroxybutanoyl-CoA = (3R)-3-hydroxybutanoyl-CoA. The enzyme catalyses a (3Z)-enoyl-CoA = a 4-saturated (2E)-enoyl-CoA. The catalysed reaction is a (3E)-enoyl-CoA = a 4-saturated (2E)-enoyl-CoA. The protein operates within lipid metabolism; fatty acid beta-oxidation. In terms of biological role, involved in the aerobic and anaerobic degradation of long-chain fatty acids via beta-oxidation cycle. Catalyzes the formation of 3-oxoacyl-CoA from enoyl-CoA via L-3-hydroxyacyl-CoA. It can also use D-3-hydroxyacyl-CoA and cis-3-enoyl-CoA as substrate. The chain is Fatty acid oxidation complex subunit alpha from Shewanella loihica (strain ATCC BAA-1088 / PV-4).